The chain runs to 439 residues: MSQTHLSNQKFADLPLHPEVKQALAENGFEFCTPIQALSLPVLLQSKDIAGQAQTGTGKTMAFLVATFNHLLSTPIPENRQLNQPRAIIMAPTRELAIQIAKDAILLAKHTHLKVGIVYGGESYDVQRKVLDQGVDILIGTTGRIIDYVRQGIISLNAIQAVVLDEADRMFDLGFIKDIRFLFRRMPNADQRLNMLFSATLSMKVQELAYDHMNDPVKVEIAPEEKTSKNIKEEIFYPSQEDKIRLLLTLIEEDWPEKAIVFSNTKHSCENLWSWLEGDGHRVGLLTGDVPQKKRIRILEQFTQGQLDILVATDVAARGLHISDVSHVYNYDLPDDCEDYVHRIGRTGRAGNKGVSVSFACEEYALNLPAIESYINHSIPVSNYDRDALLDDIPPPVKIHRKHPAGARNLRERSGAGRPQGAHRSGGRPPRHDRTRRQP.

A Q motif motif is present at residues 9 to 37 (QKFADLPLHPEVKQALAENGFEFCTPIQA). Positions 40 to 219 (LPVLLQSKDI…YDHMNDPVKV (180 aa)) constitute a Helicase ATP-binding domain. Position 53 to 60 (53 to 60 (AQTGTGKT)) interacts with ATP. Positions 165–168 (DEAD) match the DEAD box motif. One can recognise a Helicase C-terminal domain in the interval 243-390 (KIRLLLTLIE…VSNYDRDALL (148 aa)). The disordered stretch occupies residues 395-439 (PPVKIHRKHPAGARNLRERSGAGRPQGAHRSGGRPPRHDRTRRQP). Residues 425 to 439 (SGGRPPRHDRTRRQP) are compositionally biased toward basic residues.

Belongs to the DEAD box helicase family. RhlB subfamily. In terms of assembly, component of the RNA degradosome, which is a multiprotein complex involved in RNA processing and mRNA degradation.

The protein localises to the cytoplasm. It carries out the reaction ATP + H2O = ADP + phosphate + H(+). In terms of biological role, DEAD-box RNA helicase involved in RNA degradation. Has RNA-dependent ATPase activity and unwinds double-stranded RNA. This is ATP-dependent RNA helicase RhlB from Shewanella sp. (strain MR-4).